Here is a 162-residue protein sequence, read N- to C-terminus: Succinate dehydrogenase assembly factor 2, mitochondrial (162 aa).

Residues 1–35 (MHNMFPALTKTLSLQGYKIINSQTGSAAWSCGRRW) constitute a mitochondrion transit peptide.

It belongs to the SDHAF2 family. In terms of assembly, interacts with SDH1 within the SDH catalytic dimer.

Its subcellular location is the mitochondrion matrix. Its function is as follows. Plays an essential role in the assembly of succinate dehydrogenase (SDH), an enzyme complex (also referred to as respiratory complex II) that is a component of both the tricarboxylic acid (TCA) cycle and the mitochondrial electron transport chain, and which couples the oxidation of succinate to fumarate with the reduction of ubiquinone (coenzyme Q) to ubiquinol. Required for flavinylation (covalent attachment of FAD) of the flavoprotein subunit SDH1 of the SDH catalytic dimer. It is unclear whether it participates in the chemistry of FAD attachment (enzymatic function) or acts as a chaperone that maintains SDH1 in a conformation that is susceptible to autocatalytic FAD attachment. Does not bind FAD or FADH(2) in vitro. Involved in sporulation. Required for the full activation of the early meiotic inducer IME1. This is Succinate dehydrogenase assembly factor 2, mitochondrial from Saccharomyces cerevisiae (strain ATCC 204508 / S288c) (Baker's yeast).